The sequence spans 453 residues: UDP-N-acetylmuramoylalanine--D-glutamate ligase (453 aa).

An ATP-binding site is contributed by 117–123; that stretch reads GSNGKST.

The protein belongs to the MurCDEF family.

Its subcellular location is the cytoplasm. It catalyses the reaction UDP-N-acetyl-alpha-D-muramoyl-L-alanine + D-glutamate + ATP = UDP-N-acetyl-alpha-D-muramoyl-L-alanyl-D-glutamate + ADP + phosphate + H(+). The protein operates within cell wall biogenesis; peptidoglycan biosynthesis. Its function is as follows. Cell wall formation. Catalyzes the addition of glutamate to the nucleotide precursor UDP-N-acetylmuramoyl-L-alanine (UMA). The protein is UDP-N-acetylmuramoylalanine--D-glutamate ligase of Chromobacterium violaceum (strain ATCC 12472 / DSM 30191 / JCM 1249 / CCUG 213 / NBRC 12614 / NCIMB 9131 / NCTC 9757 / MK).